The primary structure comprises 77 residues: Acyl carrier protein (77 aa).

A Carrier domain is found at serine 2–threonine 77. Serine 37 carries the O-(pantetheine 4'-phosphoryl)serine modification.

Belongs to the acyl carrier protein (ACP) family. 4'-phosphopantetheine is transferred from CoA to a specific serine of apo-ACP by AcpS. This modification is essential for activity because fatty acids are bound in thioester linkage to the sulfhydryl of the prosthetic group.

It is found in the cytoplasm. The protein operates within lipid metabolism; fatty acid biosynthesis. Carrier of the growing fatty acid chain in fatty acid biosynthesis. This Geotalea daltonii (strain DSM 22248 / JCM 15807 / FRC-32) (Geobacter daltonii) protein is Acyl carrier protein.